A 190-amino-acid polypeptide reads, in one-letter code: Segregation and condensation protein B (190 aa).

Belongs to the ScpB family. As to quaternary structure, homodimer. Homodimerization may be required to stabilize the binding of ScpA to the Smc head domains. Component of a cohesin-like complex composed of ScpA, ScpB and the Smc homodimer, in which ScpA and ScpB bind to the head domain of Smc. The presence of the three proteins is required for the association of the complex with DNA.

It localises to the cytoplasm. Functionally, participates in chromosomal partition during cell division. May act via the formation of a condensin-like complex containing Smc and ScpA that pull DNA away from mid-cell into both cell halves. The chain is Segregation and condensation protein B from Bacillus thuringiensis subsp. konkukian (strain 97-27).